The chain runs to 196 residues: Superantigen-like protein 11 (196 aa).

The segment at 65–167 is sialyl Lewis X-binding; sequence LDVFVVREGS…RVTMKNGDFY (103 aa).

This sequence belongs to the staphylococcal/streptococcal toxin family. In terms of assembly, homodimer (via its C-terminal domain). Interacts with host FCAR and SELPLG (via sialyl Lewis X).

The protein resides in the secreted. In terms of biological role, secreted protein that plays a role in the inhibition of host immune system. Targets myeloid cells such as monocytes or granulocytes through binding with sialyllactosamine-containing glycoproteins. Prevents initial rolling of neutrophils toward the site of infection by interacting with host SELPLG. Disrupts neutrophil motility by induction of cell adhesion via interacting with glycans but independently of SELPLG. This Staphylococcus aureus protein is Superantigen-like protein 11.